A 366-amino-acid polypeptide reads, in one-letter code: MNKVVLLCRPGFEKECAAEITDKAGQREIFGFARVKENAGYVIYECYQPDDGDKLIRELPFSSLIFARQWFVVGELLQHLPPEDRITPIVDMLQGVVEKGGELRVEVADTNESKELLKFCRKFTVPLRAALRDAGVLANYETPKRPVVHVFFIAPGCCYTGYSYSNNNSPFYMGIPRLKFPAEAPSRSTLKLEEAFHVFIPADEWDERLANGMWAVDLGACPGGWTYQLVKRNMWVYSVDNGPMAQSLMDTGQVTWLREDGFKFRPTRSNISWMVCDMVEKPAKVAALMAQWLVNGWCRETIFNLKLPMKKRYEEVSHNLAYIQAQLDEHGINAQIQARQLYHDREEVTVHVRRIWAAVGGRRDER.

S-adenosyl-L-methionine-binding positions include Ser188, 221-224 (CPGG), Asp240, Asp260, and Asp277. Catalysis depends on Lys306, which acts as the Proton acceptor.

Belongs to the class I-like SAM-binding methyltransferase superfamily. RNA methyltransferase RlmE family. RlmM subfamily. Monomer.

The protein resides in the cytoplasm. The enzyme catalyses cytidine(2498) in 23S rRNA + S-adenosyl-L-methionine = 2'-O-methylcytidine(2498) in 23S rRNA + S-adenosyl-L-homocysteine + H(+). In terms of biological role, catalyzes the 2'-O-methylation at nucleotide C2498 in 23S rRNA. The sequence is that of Ribosomal RNA large subunit methyltransferase M from Shigella sonnei (strain Ss046).